Reading from the N-terminus, the 127-residue chain is Glycine cleavage system H protein (127 aa).

A Lipoyl-binding domain is found at 22 to 104; that stretch reads NVRIGITDYA…YDKAWMIVVK (83 aa). Lysine 63 carries the N6-lipoyllysine modification.

The protein belongs to the GcvH family. As to quaternary structure, the glycine cleavage system is composed of four proteins: P, T, L and H. The cofactor is (R)-lipoate.

In terms of biological role, the glycine cleavage system catalyzes the degradation of glycine. The H protein shuttles the methylamine group of glycine from the P protein to the T protein. Functionally, is also involved in protein lipoylation via its role as an octanoyl/lipoyl carrier protein intermediate. The polypeptide is Glycine cleavage system H protein (Geobacillus kaustophilus (strain HTA426)).